The chain runs to 168 residues: Replicase polyprotein 1ab (168 aa).

The Nidovirus-type SAM-dependent 2'-O-MTase domain occupies 1-165; the sequence is PNTKSIDGEN…KLLNFGNHLV (165 aa).

Functionally, the replicase polyprotein of coronaviruses is a multifunctional protein: it contains the activities necessary for the transcription of negative stranded RNA, leader RNA, subgenomic mRNAs and progeny virion RNA as well as proteinases responsible for the cleavage of the polyprotein into functional products. This Canine coronavirus (strain Insavc-1) (CCoV) protein is Replicase polyprotein 1ab (rep).